The chain runs to 106 residues: Large ribosomal subunit protein eL30 (106 aa).

This sequence belongs to the eukaryotic ribosomal protein eL30 family.

In Methanococcus maripaludis (strain C5 / ATCC BAA-1333), this protein is Large ribosomal subunit protein eL30.